The primary structure comprises 177 residues: NADH-quinone oxidoreductase subunit B (177 aa).

Residues Cys-53, Cys-54, Cys-118, and Cys-148 each contribute to the [4Fe-4S] cluster site.

The protein belongs to the complex I 20 kDa subunit family. NDH-1 is composed of 14 different subunits. Subunits NuoB, C, D, E, F, and G constitute the peripheral sector of the complex. [4Fe-4S] cluster serves as cofactor.

Its subcellular location is the cell membrane. The enzyme catalyses a quinone + NADH + 5 H(+)(in) = a quinol + NAD(+) + 4 H(+)(out). Functionally, NDH-1 shuttles electrons from NADH, via FMN and iron-sulfur (Fe-S) centers, to quinones in the respiratory chain. The immediate electron acceptor for the enzyme in this species is believed to be a menaquinone. Couples the redox reaction to proton translocation (for every two electrons transferred, four hydrogen ions are translocated across the cytoplasmic membrane), and thus conserves the redox energy in a proton gradient. In Anoxybacillus flavithermus (strain DSM 21510 / WK1), this protein is NADH-quinone oxidoreductase subunit B.